Here is a 98-residue protein sequence, read N- to C-terminus: Large ribosomal subunit protein uL23 (98 aa).

This sequence belongs to the universal ribosomal protein uL23 family. Part of the 50S ribosomal subunit. Contacts protein L29, and trigger factor when it is bound to the ribosome.

In terms of biological role, one of the early assembly proteins it binds 23S rRNA. One of the proteins that surrounds the polypeptide exit tunnel on the outside of the ribosome. Forms the main docking site for trigger factor binding to the ribosome. This is Large ribosomal subunit protein uL23 from Borreliella afzelii (strain PKo) (Borrelia afzelii).